A 70-amino-acid chain; its full sequence is UPF0352 protein Sfri_2492 (70 aa).

It belongs to the UPF0352 family.

In Shewanella frigidimarina (strain NCIMB 400), this protein is UPF0352 protein Sfri_2492.